The chain runs to 853 residues: Envelope glycoprotein gp160 (853 aa).

The N-terminal stretch at 1–31 (MRARGIERNCQNWWKWGIMLLGILMTCSAAD) is a signal peptide. Residues 32-681 (NLWVTVYYGV…ITQWLWYIKI (650 aa)) lie on the Extracellular side of the membrane. A disulfide bond links Cys53 and Cys73. N-linked (GlcNAc...) asparagine; by host glycosylation is found at Asn87, Asn129, Asn137, Asn143, Asn153, Asn157, Asn183, Asn188, Asn198, Asn235, Asn242, Asn263, Asn277, and Asn290. 5 disulfide bridges follow: Cys118-Cys206, Cys125-Cys197, Cys130-Cys154, Cys219-Cys248, and Cys229-Cys240. The V1 stretch occupies residues 130-153 (CSDELRNNGTMGNNVTTEEKGMKN). The tract at residues 154–197 (CSFNVTTVLKDKKQQVYALFYRLDIVPIDNDSSTNSTNYRLINC) is V2. The segment at 297-329 (CARPYQNTRQRTPIGLGQSLYTTRSRSIIGQAH) is V3. Residues Cys297 and Cys330 are joined by a disulfide bond. N-linked (GlcNAc...) asparagine; by host glycosylation is found at Asn331 and Asn353. A CD4-binding loop region spans residues 362-372 (SSGGDPEITTH). Intrachain disulfides connect Cys376–Cys442 and Cys383–Cys416. The segment at 383–416 (CNTSGLFNSTWNISAWNNITESNNSTNTNITLQC) is V4. Asn384, Asn390, Asn394, Asn400, Asn405, Asn406, Asn411, Asn445, Asn458, Asn459, and Asn462 each carry an N-linked (GlcNAc...) asparagine; by host glycan. V5 regions lie at residues 457 to 468 (INNSTNETFRPG) and 460 to 468 (STNETFRPG). The fusion peptide stretch occupies residues 509 to 529 (AIGLGAMFLGFLGAAGSTMGA). The tract at residues 571 to 589 (KQLQARILAVERYLKDQQL) is immunosuppression. Cys595 and Cys601 are disulfide-bonded. N-linked (GlcNAc...) asparagine; by host glycans are attached at residues Asn608, Asn613, Asn622, and Asn634. Residues 630-664 (REIDNYTGLIYSLIEESQTQQEKNEKELLELDKWA) adopt a coiled-coil conformation. Residues 659–680 (ELDKWASLWNWFSITQWLWYIK) form an MPER; binding to GalCer region. A helical transmembrane segment spans residues 682–702 (FIMIIGGLIGLRIVFAVLSLV). Residues 703–853 (NRVRQGYSPL…IRQGLERSLL (151 aa)) lie on the Cytoplasmic side of the membrane. Positions 709 to 712 (YSPL) match the YXXL motif; contains endocytosis signal motif. The disordered stretch occupies residues 716 to 738 (TLLPAPRGPDRPEGTEEEGGERG). Basic and acidic residues predominate over residues 723 to 738 (GPDRPEGTEEEGGERG). Residues Cys761 and Cys834 are each lipidated (S-palmitoyl cysteine; by host). The Di-leucine internalization motif signature appears at 852 to 853 (LL).

Belongs to the HIV-1 env protein family. In terms of assembly, the mature envelope protein (Env) consists of a homotrimer of non-covalently associated gp120-gp41 heterodimers. The resulting complex protrudes from the virus surface as a spike. There seems to be as few as 10 spikes on the average virion. Interacts with host CD4, CCR5 and CXCR4. Gp120 also interacts with the C-type lectins CD209/DC-SIGN and CLEC4M/DC-SIGNR (collectively referred to as DC-SIGN(R)). Gp120 and gp41 interact with GalCer. Gp120 interacts with host ITGA4/ITGB7 complex; on CD4+ T-cells, this interaction results in rapid activation of integrin ITGAL/LFA-1, which facilitates efficient cell-to-cell spreading of HIV-1. Gp120 interacts with cell-associated heparan sulfate; this interaction increases virus infectivity on permissive cells and may be involved in infection of CD4- cells. The mature envelope protein (Env) consists of a homotrimer of non-covalently associated gp120-gp41 heterodimers. The resulting complex protrudes from the virus surface as a spike. There seems to be as few as 10 spikes on the average virion. In terms of processing, highly glycosylated by host. The high number of glycan on the protein is reffered to as 'glycan shield' because it contributes to hide protein sequence from adaptive immune system. Post-translationally, palmitoylation of the transmembrane protein and of Env polyprotein (prior to its proteolytic cleavage) is essential for their association with host cell membrane lipid rafts. Palmitoylation is therefore required for envelope trafficking to classical lipid rafts, but not for viral replication. Specific enzymatic cleavages in vivo yield mature proteins. Envelope glycoproteins are synthesized as an inactive precursor that is heavily N-glycosylated and processed likely by host cell furin in the Golgi to yield the mature SU and TM proteins. The cleavage site between SU and TM requires the minimal sequence [KR]-X-[KR]-R. About 2 of the 9 disulfide bonds of gp41 are reduced by P4HB/PDI, following binding to CD4 receptor.

It localises to the virion membrane. The protein localises to the host cell membrane. Its subcellular location is the host endosome membrane. Oligomerizes in the host endoplasmic reticulum into predominantly trimers. In a second time, gp160 transits in the host Golgi, where glycosylation is completed. The precursor is then proteolytically cleaved in the trans-Golgi and thereby activated by cellular furin or furin-like proteases to produce gp120 and gp41. Its function is as follows. Attaches the virus to the host lymphoid cell by binding to the primary receptor CD4. This interaction induces a structural rearrangement creating a high affinity binding site for a chemokine coreceptor like CXCR4 and/or CCR5. Acts as a ligand for CD209/DC-SIGN and CLEC4M/DC-SIGNR, which are respectively found on dendritic cells (DCs), and on endothelial cells of liver sinusoids and lymph node sinuses. These interactions allow capture of viral particles at mucosal surfaces by these cells and subsequent transmission to permissive cells. HIV subverts the migration properties of dendritic cells to gain access to CD4+ T-cells in lymph nodes. Virus transmission to permissive T-cells occurs either in trans (without DCs infection, through viral capture and transmission), or in cis (following DCs productive infection, through the usual CD4-gp120 interaction), thereby inducing a robust infection. In trans infection, bound virions remain infectious over days and it is proposed that they are not degraded, but protected in non-lysosomal acidic organelles within the DCs close to the cell membrane thus contributing to the viral infectious potential during DCs' migration from the periphery to the lymphoid tissues. On arrival at lymphoid tissues, intact virions recycle back to DCs' cell surface allowing virus transmission to CD4+ T-cells. In terms of biological role, acts as a class I viral fusion protein. Under the current model, the protein has at least 3 conformational states: pre-fusion native state, pre-hairpin intermediate state, and post-fusion hairpin state. During fusion of viral and target intracellular membranes, the coiled coil regions (heptad repeats) assume a trimer-of-hairpins structure, positioning the fusion peptide in close proximity to the C-terminal region of the ectodomain. The formation of this structure appears to drive apposition and subsequent fusion of viral and target cell membranes. Complete fusion occurs in host cell endosomes and is dynamin-dependent, however some lipid transfer might occur at the plasma membrane. The virus undergoes clathrin-dependent internalization long before endosomal fusion, thus minimizing the surface exposure of conserved viral epitopes during fusion and reducing the efficacy of inhibitors targeting these epitopes. Membranes fusion leads to delivery of the nucleocapsid into the cytoplasm. The chain is Envelope glycoprotein gp160 from Human immunodeficiency virus type 1 group M subtype D (isolate ELI) (HIV-1).